Reading from the N-terminus, the 252-residue chain is 3-dehydroquinate dehydratase (252 aa).

3-dehydroquinate is bound by residues Ser-21, 46 to 48 (EWR), and Arg-82. The active-site Proton donor/acceptor is the His-143. Residue Lys-170 is the Schiff-base intermediate with substrate of the active site. 3-dehydroquinate is bound by residues Arg-213, Ser-232, and Gln-236.

Belongs to the type-I 3-dehydroquinase family. As to quaternary structure, homodimer.

The catalysed reaction is 3-dehydroquinate = 3-dehydroshikimate + H2O. The protein operates within metabolic intermediate biosynthesis; chorismate biosynthesis; chorismate from D-erythrose 4-phosphate and phosphoenolpyruvate: step 3/7. Its function is as follows. Involved in the third step of the chorismate pathway, which leads to the biosynthesis of aromatic amino acids. Catalyzes the cis-dehydration of 3-dehydroquinate (DHQ) and introduces the first double bond of the aromatic ring to yield 3-dehydroshikimate. This is 3-dehydroquinate dehydratase from Escherichia coli O17:K52:H18 (strain UMN026 / ExPEC).